Here is a 185-residue protein sequence, read N- to C-terminus: Probable nicotinate-nucleotide adenylyltransferase (185 aa).

It belongs to the NadD family.

The catalysed reaction is nicotinate beta-D-ribonucleotide + ATP + H(+) = deamido-NAD(+) + diphosphate. It functions in the pathway cofactor biosynthesis; NAD(+) biosynthesis; deamido-NAD(+) from nicotinate D-ribonucleotide: step 1/1. Catalyzes the reversible adenylation of nicotinate mononucleotide (NaMN) to nicotinic acid adenine dinucleotide (NaAD). The chain is Probable nicotinate-nucleotide adenylyltransferase from Methylorubrum extorquens (strain CM4 / NCIMB 13688) (Methylobacterium extorquens).